Consider the following 1199-residue polypeptide: Putative pyruvate-flavodoxin oxidoreductase (1199 aa).

4Fe-4S ferredoxin-type domains follow at residues 681–710 (EIPV…GKVY) and 737–766 (FTIQ…QPRL). Residues Cys-690, Cys-693, Cys-696, Cys-700, Cys-746, Cys-749, Cys-752, Cys-756, Cys-820, Cys-823, Cys-848, and Cys-1079 each coordinate [4Fe-4S] cluster.

The protein belongs to the pyruvate:ferredoxin/flavodoxin oxidoreductase family. [4Fe-4S] cluster is required as a cofactor.

The enzyme catalyses oxidized [flavodoxin] + pyruvate + CoA + 2 H(+) = reduced [flavodoxin] + acetyl-CoA + CO2. Functionally, oxidoreductase required for the transfer of electrons from pyruvate to flavodoxin. The polypeptide is Putative pyruvate-flavodoxin oxidoreductase (nifJ) (Synechocystis sp. (strain ATCC 27184 / PCC 6803 / Kazusa)).